We begin with the raw amino-acid sequence, 398 residues long: Cytohesin-1 (398 aa).

Residue M1 is modified to N-acetylmethionine. Positions 1-60 (MEDDDSYVPSDLTAEERQELENIRRRKQELLADIQRLKEEIAEVANEIESLGSTEERKNM) are necessary for localization at adherens junction. The stretch at 10–67 (SDLTAEERQELENIRRRKQELLADIQRLKEEIAEVANEIESLGSTEERKNMQRNKQVA) forms a coiled coil. The SEC7 domain occupies 73 to 202 (FNMDPKKGIQ…IIMLNTSLHN (130 aa)). A PH domain is found at 260–377 (NPDREGWLLK…WIKCIKAAIS (118 aa)). A 1,2-diacyl-sn-glycero-3-phospho-(1D-myo-inositol-3,4,5-trisphosphate) contacts are provided by residues 269 to 277 (KLGGGRVKT), R281, Y292, R302, and N351. The tract at residues 388–396 (RKKKVSSTK) is C-terminal autoinhibitory region.

Interacts with TRIM23 and CYTIP. Interacts (via coiled-coil domain) with FRMD4A (via coiled-coil domain). Interacts with FRMD4B. Found in a complex with PARD3, CYTH1 and FRMD4A. Interacts (via N-terminal domain) with INAVA (via N-terminal domain). Ubiquitinated by SCF(FBXW11) E3 ubiquitin-protein ligase complex. Ubiquitination induces proteasomal degradation. In terms of tissue distribution, expressed in colon and small intestine (at protein level).

It localises to the cell membrane. Its subcellular location is the cytoplasm. The protein resides in the cytosol. It is found in the cell junction. The protein localises to the tight junction. It localises to the adherens junction. In terms of biological role, promotes guanine-nucleotide exchange on ARF1, ARF5 and ARF6. Promotes the activation of ARF factors through replacement of GDP with GTP. Plays an important role in membrane trafficking, during junctional remodeling and epithelial polarization, through regulation of ARF6 activity. This chain is Cytohesin-1 (Cyth1), found in Mus musculus (Mouse).